A 1021-amino-acid polypeptide reads, in one-letter code: Putative 115 kDa protein in type-1 retrotransposable element R1DM (1021 aa).

Positions R479 to V741 constitute a Reverse transcriptase domain. Positions C955–C971 are gag-like cysteine motif.

The chain is Putative 115 kDa protein in type-1 retrotransposable element R1DM (R1A1-element\ORF2) from Drosophila melanogaster (Fruit fly).